Reading from the N-terminus, the 653-residue chain is Macrolide export ATP-binding/permease protein MacB (653 aa).

One can recognise an ABC transporter domain in the interval 6 to 244 (LQLTRVTRRF…DAAPDASGGA (239 aa)). 42-49 (GASGSGKS) lines the ATP pocket. 4 helical membrane passes run 278–298 (LLTM…VAIG), 526–546 (LTLL…IGVM), 587–607 (MGGA…SLFV), and 616–636 (AASI…FGFM).

It belongs to the ABC transporter superfamily. Macrolide exporter (TC 3.A.1.122) family. In terms of assembly, homodimer.

The protein localises to the cell inner membrane. Its function is as follows. Non-canonical ABC transporter that contains transmembrane domains (TMD), which form a pore in the inner membrane, and an ATP-binding domain (NBD), which is responsible for energy generation. Confers resistance against macrolides. This chain is Macrolide export ATP-binding/permease protein MacB, found in Burkholderia pseudomallei (strain 1710b).